A 452-amino-acid chain; its full sequence is MVMDIWTISLRILLFPSALVLCSDSFHSECYTVNGADYRGTQNQTSLDGGKPCLFWNETFQHPYNTLKYPNGEGGLGEHNYCRNPDGDVSPWCYIPEQEDGVYWKYCDIPACKMPGNLGCFRDHGNPPPLTGISETSNKQTIQTCITMCRRQRYKLAGLEAGFACFCGNNADYRKHGEMPSTDCNSVCFGDHTQPCGGDGRIILFDSLIGACGGNYSTDSAVIYSPDFPDTYGTGKACYWTIQVTDASIIRFNFTLFDIKDSRDMVELLDGYTKQVLIRFDGRNHPTHSFNISLDFVILYFFSDRINQAQGFSVVYEAFKEETIEKPNGSNNPSQTEMITQTTNLSINAARSSKILYVITTSPSRPSGHVPGWTIYALTGLLILTIIAISAKALLHISMKSARLASSSSLDSCHRGSAGEIWSIFYKPSTSISIFPKKLKGQHDDRNPLVGE.

Positions 1-22 (MVMDIWTISLRILLFPSALVLC) are cleaved as a signal peptide. Residues 23 to 369 (SDSFHSECYT…TTSPSRPSGH (347 aa)) are Extracellular-facing. Residues 29–112 (ECYTVNGADY…YWKYCDIPAC (84 aa)) form the Kringle domain. Intrachain disulfides connect cysteine 30–cysteine 112, cysteine 53–cysteine 93, cysteine 82–cysteine 107, cysteine 120–cysteine 184, cysteine 145–cysteine 165, cysteine 149–cysteine 167, cysteine 188–cysteine 196, and cysteine 212–cysteine 238. Asparagine 43 and asparagine 57 each carry an N-linked (GlcNAc...) asparagine glycan. A WSC domain is found at 114–208 (MPGNLGCFRD…DGRIILFDSL (95 aa)). In terms of domain architecture, CUB spans 212-319 (CGGNYSTDSA…QGFSVVYEAF (108 aa)). 5 N-linked (GlcNAc...) asparagine glycosylation sites follow: asparagine 215, asparagine 253, asparagine 291, asparagine 328, and asparagine 344. The chain crosses the membrane as a helical span at residues 370–390 (VPGWTIYALTGLLILTIIAIS). Residues 391–452 (AKALLHISMK…HDDRNPLVGE (62 aa)) lie on the Cytoplasmic side of the membrane.

In terms of assembly, interacts with lrp6.

The protein resides in the cell membrane. Receptor for Dickkopf proteins. Cooperates with DKK1/2 proteins to inhibit Wnt/beta-catenin signaling by promoting the endocytosis of Wnt receptors LRP5 and LRP6. In the absence of DKK1, potentiates Wnt-beta-catenin signaling by maintaining LRP5 or LRP6 at the cell membrane. The chain is Kremen protein 1 (kremen1) from Xenopus laevis (African clawed frog).